The following is a 392-amino-acid chain: ESX-1 secretion-associated protein EspA (392 aa).

Positions 302–392 are disordered; that stretch reads TRQALRPRAD…GQKVLVRNVV (91 aa). Residues 334–344 show a composition bias toward gly residues; that stretch reads QGMGGPVGMGG.

In terms of assembly, homodimer; disulfide-linked.

The protein localises to the secreted. Required for secretion of EsxA (ESAT-6) and EsxB (CFP-10) and for virulence. This Mycobacterium tuberculosis (strain CDC 1551 / Oshkosh) protein is ESX-1 secretion-associated protein EspA.